Here is a 359-residue protein sequence, read N- to C-terminus: Tricarboxylate transport protein A, mitochondrial (359 aa).

Solcar repeat units follow at residues 71-159, 170-256, and 266-351; these read THPW…LSNP, KASL…LRNW, and MHPL…VVKL. Helical transmembrane passes span 77–97, 171–191, 269–289, and 336–356; these read IFAGGIAGGIEICITFPTEYV, ASLLCGLGAGIAEAVLVVCPM, LVTAMFGATAGAASVFGNTPL, and LDVAIVFVLYEEVVKLLNNVW.

It belongs to the mitochondrial carrier (TC 2.A.29) family. Possesses a short cleavable presequence, which, however, is found to be dispensable both for targeting to mitochondria and insertion into the inner membrane. However, the presequence is required to keep SLC25A1 in a soluble state and thus in an import-competent state. Mature SLC25A1 lacking the presequence is prone to aggregation.

It localises to the mitochondrion inner membrane. The enzyme catalyses (S)-malate(in) + citrate(out) = (S)-malate(out) + citrate(in). The catalysed reaction is D-threo-isocitrate(in) + citrate(out) = D-threo-isocitrate(out) + citrate(in). It catalyses the reaction citrate(out) + succinate(in) = citrate(in) + succinate(out). It carries out the reaction cis-aconitate(in) + citrate(out) = cis-aconitate(out) + citrate(in). The enzyme catalyses trans-aconitate(in) + citrate(out) = trans-aconitate(out) + citrate(in). The catalysed reaction is phosphoenolpyruvate(in) + citrate(out) = phosphoenolpyruvate(out) + citrate(in). It catalyses the reaction maleate(in) + citrate(out) = maleate(out) + citrate(in). Its function is as follows. Mitochondrial electroneutral antiporter that exports citrate from the mitochondria into the cytosol in exchange for malate. Also able to mediate the exchange of citrate for isocitrate, phosphoenolpyruvate, cis-aconitate and to a lesser extent trans-aconitate, maleate and succinate. In the cytoplasm, citrate plays important roles in fatty acid and sterol synthesis, regulation of glycolysis, protein acetylation, and other physiopathological processes. In Danio rerio (Zebrafish), this protein is Tricarboxylate transport protein A, mitochondrial.